Here is a 478-residue protein sequence, read N- to C-terminus: Cysteine--tRNA ligase (478 aa).

Residue C29 coordinates Zn(2+). The short motif at 31–41 (PTVYDIPHIGN) is the 'HIGH' region element. Residues C216, H241, and E245 each contribute to the Zn(2+) site. The 'KMSKS' region motif lies at 274-278 (KMSKS). ATP is bound at residue K277.

Belongs to the class-I aminoacyl-tRNA synthetase family. Monomer. Zn(2+) is required as a cofactor.

It is found in the cytoplasm. It carries out the reaction tRNA(Cys) + L-cysteine + ATP = L-cysteinyl-tRNA(Cys) + AMP + diphosphate. The sequence is that of Cysteine--tRNA ligase from Orientia tsutsugamushi (strain Ikeda) (Rickettsia tsutsugamushi).